The chain runs to 28 residues: leu operon leader peptide (28 aa).

Involved in control of the biosynthesis of leucine. The polypeptide is leu operon leader peptide (leuL) (Salmonella typhimurium (strain LT2 / SGSC1412 / ATCC 700720)).